Consider the following 1169-residue polypeptide: Pesticidal crystal protein Cry1Fb (1169 aa).

It belongs to the delta endotoxin family.

Promotes colloidosmotic lysis by binding to the midgut epithelial cells of insects. The sequence is that of Pesticidal crystal protein Cry1Fb (cry1Fb) from Bacillus thuringiensis subsp. morrisoni.